A 50-amino-acid polypeptide reads, in one-letter code: DLWQWGQMILKETGKLPFSYYTAYGCYCGWGGRGGKPKADTDRCCFVHDC.

Ca(2+) is bound by residues Tyr-27, Gly-29, and Gly-31. A disulfide bond links Cys-28 and Cys-45. His-48 is an active-site residue. Position 49 (Asp-49) interacts with Ca(2+).

Belongs to the phospholipase A2 family. Group II subfamily. D49 sub-subfamily. The cofactor is Ca(2+). Expressed by the venom gland.

It is found in the secreted. The catalysed reaction is a 1,2-diacyl-sn-glycero-3-phosphocholine + H2O = a 1-acyl-sn-glycero-3-phosphocholine + a fatty acid + H(+). In terms of biological role, snake venom phospholipase A2 (PLA2) that causes irreversible neuromuscular blockade in chick biventer cervicis muscle preparations. The neuromuscular blockade is mediated by inhibitory action at the presynaptic motor nerve endings. PLA2 catalyzes the calcium-dependent hydrolysis of the 2-acyl groups in 3-sn-phosphoglycerides. The chain is Basic phospholipase A2 Bmaj-9 from Bothrops marajoensis (Marajo lancehead).